A 165-amino-acid polypeptide reads, in one-letter code: Acireductone dioxygenase (165 aa).

Fe(2+) contacts are provided by His90, His92, Glu96, and His134. The Ni(2+) site is built by His90, His92, Glu96, and His134.

It belongs to the acireductone dioxygenase (ARD) family. In terms of assembly, monomer. Requires Fe(2+) as cofactor. The cofactor is Ni(2+).

It catalyses the reaction 1,2-dihydroxy-5-(methylsulfanyl)pent-1-en-3-one + O2 = 3-(methylsulfanyl)propanoate + CO + formate + 2 H(+). The catalysed reaction is 1,2-dihydroxy-5-(methylsulfanyl)pent-1-en-3-one + O2 = 4-methylsulfanyl-2-oxobutanoate + formate + 2 H(+). It participates in amino-acid biosynthesis; L-methionine biosynthesis via salvage pathway; L-methionine from S-methyl-5-thio-alpha-D-ribose 1-phosphate: step 5/6. In terms of biological role, catalyzes 2 different reactions between oxygen and the acireductone 1,2-dihydroxy-3-keto-5-methylthiopentene (DHK-MTPene) depending upon the metal bound in the active site. Fe-containing acireductone dioxygenase (Fe-ARD) produces formate and 2-keto-4-methylthiobutyrate (KMTB), the alpha-ketoacid precursor of methionine in the methionine recycle pathway. Ni-containing acireductone dioxygenase (Ni-ARD) produces methylthiopropionate, carbon monoxide and formate, and does not lie on the methionine recycle pathway. The polypeptide is Acireductone dioxygenase (Rhodopseudomonas palustris (strain ATCC BAA-98 / CGA009)).